Consider the following 255-residue polypeptide: 5-oxoprolinase subunit A (255 aa).

The protein belongs to the LamB/PxpA family. As to quaternary structure, forms a complex composed of PxpA, PxpB and PxpC.

The catalysed reaction is 5-oxo-L-proline + ATP + 2 H2O = L-glutamate + ADP + phosphate + H(+). Its function is as follows. Catalyzes the cleavage of 5-oxoproline to form L-glutamate coupled to the hydrolysis of ATP to ADP and inorganic phosphate. This is 5-oxoprolinase subunit A from Pyrococcus horikoshii (strain ATCC 700860 / DSM 12428 / JCM 9974 / NBRC 100139 / OT-3).